The chain runs to 228 residues: MADS-box transcription factor 22 (228 aa).

Positions 1–61 (MARERREIKR…GKLSHFASSS (61 aa)) constitute an MADS-box domain. The region spanning 86-176 (LNLEHSKYAH…RNQVSQISPA (91 aa)) is the K-box domain. Positions 189–217 (EGQSSESVMTALHSGSSQSQDNDDGSDVS) are disordered.

As to expression, expressed in palea and stamen primordia. Expressed in shoots and coleoptiles.

Its subcellular location is the nucleus. Its function is as follows. Probable transcription factor. May be required for spikelet (rice flower) development. Transcription factor that functions to support the MADS55 in its function as negative regulator of brassinosteroid signaling. This Oryza sativa subsp. japonica (Rice) protein is MADS-box transcription factor 22 (MADS22).